The following is a 110-amino-acid chain: Mitochondrial pyruvate carrier 1 (110 aa).

2 helical membrane passes run 20 to 36 (HFWG…AGLV) and 44 to 61 (MISG…ALFM).

It belongs to the mitochondrial pyruvate carrier (MPC) (TC 2.A.105) family.

Its subcellular location is the mitochondrion inner membrane. In terms of biological role, mediates the uptake of pyruvate into mitochondria. This chain is Mitochondrial pyruvate carrier 1, found in Arabidopsis thaliana (Mouse-ear cress).